The chain runs to 214 residues: MTSFVLASASPARLAVLRSAGVEPIVRVSGVDEDAVIAALGADAAPEHVVTELARAKASDVLPVLARDGISDAVVVGCDSMLLIDGSLQGKPGTVDVARARWSAMAGRSATLLTGHSVLRIAEGAVVGDAHDHSATVVHFASPPDADLEAYLATGEPLQVAGAFTLDSLGGWFVDRIEGDPSSVIGIGLPLVRRLLAEVGVGVAELWASSGRVD.

D79 functions as the Proton acceptor in the catalytic mechanism.

Belongs to the Maf family. The cofactor is a divalent metal cation.

The protein localises to the cytoplasm. The enzyme catalyses a ribonucleoside 5'-triphosphate + H2O = a ribonucleoside 5'-phosphate + diphosphate + H(+). It catalyses the reaction a 2'-deoxyribonucleoside 5'-triphosphate + H2O = a 2'-deoxyribonucleoside 5'-phosphate + diphosphate + H(+). In terms of biological role, nucleoside triphosphate pyrophosphatase. May have a dual role in cell division arrest and in preventing the incorporation of modified nucleotides into cellular nucleic acids. The protein is Nucleoside triphosphate pyrophosphatase of Rhodococcus jostii (strain RHA1).